We begin with the raw amino-acid sequence, 209 residues long: Transcription factor atf31 (209 aa).

Residues 90–103 (SKSPSIISEASHNS) are compositionally biased toward polar residues. A disordered region spans residues 90–133 (SKSPSIISEASHNSPSRELDDSGDENTSKLTGTKQSMLKARNRQ). The 64-residue stretch at 121-184 (GTKQSMLKAR…IKLRTLVFAH (64 aa)) folds into the bZIP domain. The tract at residues 123–161 (KQSMLKARNRQAAQKCRIKKKKYLQTLQDQVNYYTSENK) is basic motif. The segment at 163–177 (LLQSANDLREEIIKL) is leucine-zipper.

It belongs to the bZIP family.

The protein resides in the nucleus. The polypeptide is Transcription factor atf31 (atf31) (Schizosaccharomyces pombe (strain 972 / ATCC 24843) (Fission yeast)).